A 127-amino-acid polypeptide reads, in one-letter code: uncharacterized protein (127 aa).

A run of 2 helical transmembrane segments spans residues 48–68 (LYSL…PLSI) and 83–103 (VFLF…CLID).

Its subcellular location is the membrane. This is an uncharacterized protein from Saccharomyces cerevisiae (strain ATCC 204508 / S288c) (Baker's yeast).